A 298-amino-acid chain; its full sequence is DDRGK domain-containing protein 1 (298 aa).

Over 1–2 (ME) the chain is Lumenal. Residues 3–23 (EIFALIVSMILIVAVIPLFFW) form a helical membrane-spanning segment. Over 24–298 (KRRRDARSRE…ISGMEEISVS (275 aa)) the chain is Cytoplasmic. The interval 31-155 (SREEVAEPPQ…EEEKARQAKE (125 aa)) is disordered. Positions 101–155 (KRQEREAQRQAEEATRESRNTKQDWYAEMRRKKDEEREAEELKLEEEEKARQAKE) are enriched in basic and acidic residues.

Belongs to the DDRGK1 family.

It is found in the endoplasmic reticulum membrane. Functionally, substrate adapter for ufmylation, the covalent attachment of the ubiquitin-like modifier UFM1 to substrate proteins. The chain is DDRGK domain-containing protein 1 from Arabidopsis thaliana (Mouse-ear cress).